The following is a 122-amino-acid chain: Small ribosomal subunit protein uS13 (122 aa).

The tract at residues 94 to 122 is disordered; the sequence is KKLPVRGQRTHTNARTRKGPAKPIAGKKK.

This sequence belongs to the universal ribosomal protein uS13 family. Part of the 30S ribosomal subunit. Forms a loose heterodimer with protein S19. Forms two bridges to the 50S subunit in the 70S ribosome.

Located at the top of the head of the 30S subunit, it contacts several helices of the 16S rRNA. In the 70S ribosome it contacts the 23S rRNA (bridge B1a) and protein L5 of the 50S subunit (bridge B1b), connecting the 2 subunits; these bridges are implicated in subunit movement. Contacts the tRNAs in the A and P-sites. The protein is Small ribosomal subunit protein uS13 of Hyphomonas neptunium (strain ATCC 15444).